We begin with the raw amino-acid sequence, 448 residues long: Probable glycine dehydrogenase (decarboxylating) subunit 1 (448 aa).

The protein belongs to the GcvP family. N-terminal subunit subfamily. In terms of assembly, the glycine cleavage system is composed of four proteins: P, T, L and H. In this organism, the P 'protein' is a heterodimer of two subunits.

It catalyses the reaction N(6)-[(R)-lipoyl]-L-lysyl-[glycine-cleavage complex H protein] + glycine + H(+) = N(6)-[(R)-S(8)-aminomethyldihydrolipoyl]-L-lysyl-[glycine-cleavage complex H protein] + CO2. Functionally, the glycine cleavage system catalyzes the degradation of glycine. The P protein binds the alpha-amino group of glycine through its pyridoxal phosphate cofactor; CO(2) is released and the remaining methylamine moiety is then transferred to the lipoamide cofactor of the H protein. This Listeria monocytogenes serotype 4a (strain HCC23) protein is Probable glycine dehydrogenase (decarboxylating) subunit 1.